Reading from the N-terminus, the 242-residue chain is Stress response regulator protein 1 (242 aa).

A Response regulatory domain is found at 118–236 (NFLLVDDNFI…FDHIITCIEK (119 aa)). Residue Asp169 is modified to 4-aspartylphosphate.

Its function is as follows. Required for stress adaptation, morphogenesis and virulence. The polypeptide is Stress response regulator protein 1 (SRR1) (Debaryomyces hansenii (strain ATCC 36239 / CBS 767 / BCRC 21394 / JCM 1990 / NBRC 0083 / IGC 2968) (Yeast)).